A 626-amino-acid chain; its full sequence is Glutamine--fructose-6-phosphate aminotransferase [isomerizing] (626 aa).

The active-site Nucleophile; for GATase activity is the C2. Positions 2-222 (CGIVGYIGPQ…NGELARLTPT (221 aa)) constitute a Glutamine amidotransferase type-2 domain. 2 consecutive SIS domains span residues 293–441 (LPPS…QRQS) and 471–616 (YIEA…VDQP). K621 functions as the For Fru-6P isomerization activity in the catalytic mechanism.

In terms of assembly, homodimer.

It localises to the cytoplasm. It carries out the reaction D-fructose 6-phosphate + L-glutamine = D-glucosamine 6-phosphate + L-glutamate. Its function is as follows. Catalyzes the first step in hexosamine metabolism, converting fructose-6P into glucosamine-6P using glutamine as a nitrogen source. In Thermosynechococcus vestitus (strain NIES-2133 / IAM M-273 / BP-1), this protein is Glutamine--fructose-6-phosphate aminotransferase [isomerizing].